We begin with the raw amino-acid sequence, 752 residues long: Photosystem I P700 chlorophyll a apoprotein A1 (752 aa).

8 helical membrane passes run 73 to 96, 159 to 182, 198 to 222, 294 to 312, 349 to 372, 388 to 414, 436 to 458, and 533 to 551; these read IFSA…FHGA, LYWI…FHYH, MNHH…HVAL, IAHH…GHMY, WHAQ…HHMY, LSLF…IFMV, SIIA…FYIH, and FMVH…LILL. Positions 575 and 584 each coordinate [4Fe-4S] cluster. The next 2 helical transmembrane spans lie at 591-612 and 666-688; these read HVFL…HFSW and ASAY…MFLF. Position 677 (H677) interacts with chlorophyll a'. Chlorophyll a-binding residues include M685 and Y693. A phylloquinone-binding site is contributed by W694. A helical membrane pass occupies residues 726–746; that stretch reads AVGLAHYLLGGIGTTWAFFLA.

The protein belongs to the PsaA/PsaB family. The PsaA/B heterodimer binds the P700 chlorophyll special pair and subsequent electron acceptors. PSI consists of a core antenna complex that captures photons, and an electron transfer chain that converts photonic excitation into a charge separation. The eukaryotic PSI reaction center is composed of at least 11 subunits. P700 is a chlorophyll a/chlorophyll a' dimer, A0 is one or more chlorophyll a, A1 is one or both phylloquinones and FX is a shared 4Fe-4S iron-sulfur center. serves as cofactor.

Its subcellular location is the plastid. The protein resides in the chloroplast thylakoid membrane. It carries out the reaction reduced [plastocyanin] + hnu + oxidized [2Fe-2S]-[ferredoxin] = oxidized [plastocyanin] + reduced [2Fe-2S]-[ferredoxin]. Its function is as follows. PsaA and PsaB bind P700, the primary electron donor of photosystem I (PSI), as well as the electron acceptors A0, A1 and FX. PSI is a plastocyanin/cytochrome c6-ferredoxin oxidoreductase, converting photonic excitation into a charge separation, which transfers an electron from the donor P700 chlorophyll pair to the spectroscopically characterized acceptors A0, A1, FX, FA and FB in turn. Oxidized P700 is reduced on the lumenal side of the thylakoid membrane by plastocyanin or cytochrome c6. The chain is Photosystem I P700 chlorophyll a apoprotein A1 from Phaeodactylum tricornutum (strain CCAP 1055/1).